The following is a 463-amino-acid chain: Formate-nitrite transporter 2 (463 aa).

Residues 1–100 (MCSIPPLRLL…VKKTQLRIDR (100 aa)) are Cytoplasmic-facing. Residues 101-121 (LLLQAFMAGIFVAMAGHCCTV) traverse the membrane as a helical segment. Residues 122–142 (LAGSYPTDPGDPLAVAKPTQK) are Extracellular-facing. Residues 143-163 (FIYGALFPVAFICIILTGAEL) traverse the membrane as a helical segment. Residues 164-189 (FTGNTMTMLICYFQKRVTMLQLGVNW) are Cytoplasmic-facing. A helical membrane pass occupies residues 190 to 210 (LGSLAGNWLGALFGAYFLSYL). Residues 211–237 (TGALGDEHVRQFLFRTCVNKISYGWGE) are Extracellular-facing. Residues 238-258 (CFLRGVGCNTFVCLAVWAVIA) form a helical membrane-spanning segment. Topologically, residues 259–265 (SENVAGK) are cytoplasmic. The chain crosses the membrane as a helical span at residues 266-286 (VLVMWFPIVAFCVGGYEHIIA). The Extracellular portion of the chain corresponds to 287–305 (NMYTLQAGLMAGAPVAILD). The helical transmembrane segment at 306–326 (VIAFNFLPTLLGNIVGGCLLV) threads the bilayer. Over 327–463 (GAVYAYNFYP…QTAESVAQQV (137 aa)) the chain is Cytoplasmic. The segment at 424–463 (SGNLSTHARLDLPNRPVEPPSDGLEVTPQSQTAESVAQQV) is disordered. Over residues 450 to 463 (TPQSQTAESVAQQV) the composition is skewed to polar residues.

The protein belongs to the FNT transporter (TC 1.A.16) family. In terms of assembly, homopentamer.

The protein resides in the cell membrane. The catalysed reaction is (S)-lactate(in) + H(+)(in) = (S)-lactate(out) + H(+)(out). It catalyses the reaction formate(in) + H(+)(in) = formate(out) + H(+)(out). It carries out the reaction pyruvate(out) + H(+)(out) = pyruvate(in) + H(+)(in). The enzyme catalyses acetate(out) + H(+)(out) = acetate(in) + H(+)(in). Inhibited by p-chloromercuribenzene sulfonate (pCMBS). Methyl methanethiosulfonate (MMTS) inhibits L-lactate but not formate transport. Inhibited by the Malaria Box compound MMV007839. Inhibited by BH-296, BH-317, BH-326 and BH-388 compounds. In terms of biological role, monocarboxylate-proton symporter; active in acidic-to-neutral pH range. Transports L-lactate and formate. This chain is Formate-nitrite transporter 2, found in Toxoplasma gondii (strain ATCC 50611 / Me49).